Reading from the N-terminus, the 180-residue chain is HTH-type transcriptional regulator EcpR (180 aa).

Residues K122–Q180 enclose the HTH luxR-type domain. The segment at residues P146–R165 is a DNA-binding region (H-T-H motif).

The protein belongs to the EcpR/MatA family.

It is found in the cytoplasm. Functionally, part of the ecpRABCDE operon, which encodes the E.coli common pilus (ECP). ECP plays a dual role in early-stage biofilm development and host cell recognition. Positively regulates the expression of the ecp operon. The chain is HTH-type transcriptional regulator EcpR (ecpR) from Klebsiella pneumoniae (strain 342).